Reading from the N-terminus, the 246-residue chain is Sensory transduction protein LytT (246 aa).

The region spanning 4-120 (HIMIAEDERL…RFKIAMNRIR (117 aa)) is the Response regulatory domain. D55 bears the 4-aspartylphosphate mark. Residues 136 to 243 (LVVNLDEKMM…AKGLFDALQG (108 aa)) form the HTH LytTR-type domain.

Post-translationally, phosphorylated by LytS.

The protein localises to the cytoplasm. Functionally, member of the two-component regulatory system LytS/LytT that probably regulates genes involved in cell wall metabolism. This is Sensory transduction protein LytT (lytT) from Oceanobacillus iheyensis (strain DSM 14371 / CIP 107618 / JCM 11309 / KCTC 3954 / HTE831).